The primary structure comprises 353 residues: Heat-inducible transcription repressor HrcA (353 aa).

This sequence belongs to the HrcA family.

In terms of biological role, negative regulator of class I heat shock genes (grpE-dnaK-dnaJ and groELS operons). Prevents heat-shock induction of these operons. The sequence is that of Heat-inducible transcription repressor HrcA from Anaeromyxobacter dehalogenans (strain 2CP-1 / ATCC BAA-258).